We begin with the raw amino-acid sequence, 291 residues long: UPF0276 protein VV3194 (291 aa).

The protein belongs to the UPF0276 family.

This chain is UPF0276 protein VV3194, found in Vibrio vulnificus (strain YJ016).